We begin with the raw amino-acid sequence, 67 residues long: Penaeidin-4c (67 aa).

The signal sequence occupies residues 1-19; that stretch reads MRLVVCLVFLASFALVCQG. Disulfide bonds link cysteine 42-cysteine 56, cysteine 45-cysteine 63, and cysteine 57-cysteine 64. Arginine 66 carries the post-translational modification Arginine amide.

The protein belongs to the penaeidin family.

Its subcellular location is the cytoplasmic granule. Its function is as follows. Antibacterial and antifungal activity. Presents chitin-binding activity. The chain is Penaeidin-4c from Penaeus vannamei (Whiteleg shrimp).